The primary structure comprises 413 residues: Argininosuccinate synthase (413 aa).

An ATP-binding site is contributed by 22–30 (AYSGGLDTS). 2 residues coordinate L-citrulline: Tyr100 and Ser105. Gly130 contacts ATP. The L-aspartate site is built by Thr132, Asn136, and Asp137. L-citrulline is bound at residue Asn136. The L-citrulline site is built by Arg140, Ser189, Ser198, Glu274, and Tyr286.

This sequence belongs to the argininosuccinate synthase family. Type 1 subfamily. In terms of assembly, homotetramer.

It localises to the cytoplasm. The enzyme catalyses L-citrulline + L-aspartate + ATP = 2-(N(omega)-L-arginino)succinate + AMP + diphosphate + H(+). It functions in the pathway amino-acid biosynthesis; L-arginine biosynthesis; L-arginine from L-ornithine and carbamoyl phosphate: step 2/3. This chain is Argininosuccinate synthase, found in Endomicrobium trichonymphae.